Reading from the N-terminus, the 29-residue chain is Lambda-theraphotoxin-Ec2b (29 aa).

Cystine bridges form between cysteine 2–cysteine 16, cysteine 9–cysteine 21, and cysteine 15–cysteine 25.

The protein belongs to the neurotoxin 30 (phrixotoxin) family. In terms of tissue distribution, expressed by the venom gland.

It localises to the secreted. Functionally, insect-selective neurotoxin that potently blocks insect calcium-activated potassium (BKCa) channels (Slo-type) in cockroach dorsal unpaired median (DUM) neurons (IC(50)=25.3 nM). This occurs in the absence of any shifts in the voltage dependence of activation. May interact with the turret and/or loop region of the external entrance to the channel and does not project deeply into the pore of the channel. In vivo, does not show toxicity in mice after intracerebroventricular injection of up to 25 pmol/g (1.8 ug/20 g mouse). The polypeptide is Lambda-theraphotoxin-Ec2b (Eucratoscelus constrictus (African red-rump baboon spider)).